The sequence spans 150 residues: Actin-depolymerizing factor 3 (150 aa).

An ADF-H domain is found at glycine 7–serine 150.

It belongs to the actin-binding proteins ADF family.

In terms of biological role, actin-depolymerizing protein. Severs actin filaments (F-actin) and binds to actin monomers. This Oryza sativa subsp. japonica (Rice) protein is Actin-depolymerizing factor 3 (ADF3).